We begin with the raw amino-acid sequence, 605 residues long: DNA mismatch repair protein MutL (605 aa).

This sequence belongs to the DNA mismatch repair MutL/HexB family.

In terms of biological role, this protein is involved in the repair of mismatches in DNA. It is required for dam-dependent methyl-directed DNA mismatch repair. May act as a 'molecular matchmaker', a protein that promotes the formation of a stable complex between two or more DNA-binding proteins in an ATP-dependent manner without itself being part of a final effector complex. The polypeptide is DNA mismatch repair protein MutL (Rhizobium meliloti (strain 1021) (Ensifer meliloti)).